The primary structure comprises 177 residues: Acireductone dioxygenase (177 aa).

Positions 99, 101, 105, and 143 each coordinate Fe(2+). 4 residues coordinate Ni(2+): H99, H101, E105, and H143.

It belongs to the acireductone dioxygenase (ARD) family. Monomer. Requires Fe(2+) as cofactor. Ni(2+) is required as a cofactor.

It catalyses the reaction 1,2-dihydroxy-5-(methylsulfanyl)pent-1-en-3-one + O2 = 3-(methylsulfanyl)propanoate + CO + formate + 2 H(+). It carries out the reaction 1,2-dihydroxy-5-(methylsulfanyl)pent-1-en-3-one + O2 = 4-methylsulfanyl-2-oxobutanoate + formate + 2 H(+). Its pathway is amino-acid biosynthesis; L-methionine biosynthesis via salvage pathway; L-methionine from S-methyl-5-thio-alpha-D-ribose 1-phosphate: step 5/6. Its function is as follows. Catalyzes 2 different reactions between oxygen and the acireductone 1,2-dihydroxy-3-keto-5-methylthiopentene (DHK-MTPene) depending upon the metal bound in the active site. Fe-containing acireductone dioxygenase (Fe-ARD) produces formate and 2-keto-4-methylthiobutyrate (KMTB), the alpha-ketoacid precursor of methionine in the methionine recycle pathway. Ni-containing acireductone dioxygenase (Ni-ARD) produces methylthiopropionate, carbon monoxide and formate, and does not lie on the methionine recycle pathway. This chain is Acireductone dioxygenase, found in Leptospira interrogans serogroup Icterohaemorrhagiae serovar copenhageni (strain Fiocruz L1-130).